Here is a 299-residue protein sequence, read N- to C-terminus: Leucine zipper transcription factor-like protein 1 (299 aa).

The stretch at 96–296 forms a coiled coil; that stretch reads LKLQTDISEL…DLRKRLAKYE (201 aa). The interaction with BSS9 stretch occupies residues 145–299; it reads GAAELLNKEI…KRLAKYEPED (155 aa).

The protein belongs to the LZTFL1 family. In terms of assembly, self-associates. Interacts with BBS9; the interaction mediates the association of LZTL1 with the BBsome complex and regulates BBSome ciliary trafficking.

It localises to the cytoplasm. In terms of biological role, regulates ciliary localization of the BBSome complex. Together with the BBSome complex, controls SMO ciliary trafficking and contributes to the sonic hedgehog (SHH) pathway regulation. May play a role in neurite outgrowth. May have tumor suppressor function. The polypeptide is Leucine zipper transcription factor-like protein 1 (LZTFL1) (Bos taurus (Bovine)).